The primary structure comprises 845 residues: Matrin-3 (845 aa).

S2 bears the N-acetylserine mark. An N6-acetyllysine; alternate modification is found at K3. K3 participates in a covalent cross-link: Glycyl lysine isopeptide (Lys-Gly) (interchain with G-Cter in SUMO2); alternate. Phosphoserine is present on residues S4, S9, S14, S22, S41, S118, and S126. Glycyl lysine isopeptide (Lys-Gly) (interchain with G-Cter in SUMO2) cross-links involve residues K132 and K146. 2 disordered regions span residues 147-174 (RRRT…YRVP) and 187-213 (DSFD…ESGY). T150 carries the post-translational modification Phosphothreonine. S157 bears the Phosphoserine mark. Y158 is subject to Phosphotyrosine. Positions 160–174 (RDGRSATREPPYRVP) are enriched in basic and acidic residues. Residues S164, S188, and S195 each carry the phosphoserine modification. The span at 201–213 (DYDHGSRSQESGY) shows a compositional bias: basic and acidic residues. The residue at position 202 (Y202) is a Phosphotyrosine. 3 positions are modified to phosphoserine: S206, S208, and S211. Phosphotyrosine is present on Y219. Residue S234 is modified to Phosphoserine. Residue K245 forms a Glycyl lysine isopeptide (Lys-Gly) (interchain with G-Cter in SUMO2) linkage. Position 264 is a phosphoserine (S264). K269 is covalently cross-linked (Glycyl lysine isopeptide (Lys-Gly) (interchain with G-Cter in SUMO2)). A Phosphoserine modification is found at S275. The tract at residues 342 to 394 (PFMLQQSTNPAPGILGPPPPSFHLGGPAVGPRGNLGAGNGNLQGPRHMQKGRV) is disordered. Residues 398–473 (RVVHIMDFQR…KPVRVHLSQK (76 aa)) form the RRM 1 domain. Glycyl lysine isopeptide (Lys-Gly) (interchain with G-Cter in SUMO2) cross-links involve residues K478, K487, and K491. In terms of domain architecture, RRM 2 spans 496–571 (RVIHLSNLPH…RCVKVDLSEK (76 aa)). A phosphoserine mark is found at S509 and S511. K515 is covalently cross-linked (Glycyl lysine isopeptide (Lys-Gly) (interchain with G-Cter in SUMO2)). N6-acetyllysine; alternate is present on K522. Residue K522 forms a Glycyl lysine isopeptide (Lys-Gly) (interchain with G-Cter in SUMO2); alternate linkage. A Phosphoserine modification is found at S533. Glycyl lysine isopeptide (Lys-Gly) (interchain with G-Cter in SUMO2) cross-links involve residues K554 and K555. At K571 the chain carries N6-acetyllysine. The segment at 588–785 (KKDKSRKRSY…EYRIGPYQPN (198 aa)) is disordered. S596, S598, S604, and S606 each carry phosphoserine. The segment covering 600-643 (DGKESPSDKKSKTDGAQKTENPAEGKEQEEKSGEDGEKDTKDDQ) has biased composition (basic and acidic residues). Residues K617 and K630 each participate in a glycyl lysine isopeptide (Lys-Gly) (interchain with G-Cter in SUMO2) cross-link. A compositionally biased stretch (acidic residues) spans 653–665 (ESEDELLVDEEEA). A phosphoserine mark is found at S654, S671, S673, and S674. Phosphothreonine is present on T679. S689 carries the phosphoserine modification. Residues 689-704 (SDGKKEPSDKAVKKDA) show a composition bias toward basic and acidic residues. The Nuclear localization signal signature appears at 708–716 (SKKKLKKVD). Glycyl lysine isopeptide (Lys-Gly) (interchain with G-Cter in SUMO2) cross-links involve residues K717 and K734. T739 carries the phosphothreonine modification. Phosphoserine occurs at positions 745, 757, and 760. The segment covering 765 to 778 (DENKEDYTIPDEYR) has biased composition (basic and acidic residues). K768 participates in a covalent cross-link: Glycyl lysine isopeptide (Lys-Gly) (interchain with G-Cter in SUMO2). The Matrin-type zinc finger occupies 799-830 (FYCKLCSLFYTNEEVAKNTHCSSLPHYQKLKK). N6-acetyllysine; alternate is present on K834. K834 is covalently cross-linked (Glycyl lysine isopeptide (Lys-Gly) (interchain with G-Cter in SUMO2); alternate).

In terms of assembly, part of a complex consisting of SFPQ, NONO and MATR3. Interacts with AGO1 and AGO2. Part of a complex composed at least of ASH2L, EMSY, HCFC1, HSPA8, CCAR2, MATR3, MKI67, RBBP5, TUBB2A, WDR5 and ZNF335; this complex may have a histone H3-specific methyltransferase activity. Interacts with TARDBP. Part of the HDP-RNP complex composed of at least HEXIM1, PRKDC, XRCC5, XRCC6, paraspeckle proteins (SFPQ, NONO, PSPC1, RBM14, and MATR3) and NEAT1 RNA. Interacts with FUS. Interacts with IGF2BP1. Interacts with IGF2BP2 and IGF2BP3. Interacts with RBPMS.

The protein localises to the nucleus matrix. Its function is as follows. May play a role in transcription or may interact with other nuclear matrix proteins to form the internal fibrogranular network. In association with the SFPQ-NONO heteromer may play a role in nuclear retention of defective RNAs. Plays a role in the regulation of DNA virus-mediated innate immune response by assembling into the HDP-RNP complex, a complex that serves as a platform for IRF3 phosphorylation and subsequent innate immune response activation through the cGAS-STING pathway. Binds to N6-methyladenosine (m6A)-containing mRNAs and contributes to MYC stability by binding to m6A-containing MYC mRNAs. May bind to specific miRNA hairpins. This chain is Matrin-3 (Matr3), found in Rattus norvegicus (Rat).